We begin with the raw amino-acid sequence, 295 residues long: UDP-N-acetylenolpyruvoylglucosamine reductase (295 aa).

The region spanning 24–188 is the FAD-binding PCMH-type domain; that stretch reads KVGGNAEIFF…LKVIFKINKG (165 aa). Arginine 168 is an active-site residue. Serine 217 functions as the Proton donor in the catalytic mechanism. The active site involves glutamate 287.

This sequence belongs to the MurB family. FAD serves as cofactor.

The protein localises to the cytoplasm. The enzyme catalyses UDP-N-acetyl-alpha-D-muramate + NADP(+) = UDP-N-acetyl-3-O-(1-carboxyvinyl)-alpha-D-glucosamine + NADPH + H(+). It functions in the pathway cell wall biogenesis; peptidoglycan biosynthesis. Functionally, cell wall formation. This chain is UDP-N-acetylenolpyruvoylglucosamine reductase, found in Rickettsia rickettsii (strain Iowa).